The primary structure comprises 98 residues: Large ribosomal subunit protein uL23 (98 aa).

This sequence belongs to the universal ribosomal protein uL23 family. In terms of assembly, part of the 50S ribosomal subunit. Contacts protein L29, and trigger factor when it is bound to the ribosome.

Functionally, one of the early assembly proteins it binds 23S rRNA. One of the proteins that surrounds the polypeptide exit tunnel on the outside of the ribosome. Forms the main docking site for trigger factor binding to the ribosome. The sequence is that of Large ribosomal subunit protein uL23 from Clostridium beijerinckii (strain ATCC 51743 / NCIMB 8052) (Clostridium acetobutylicum).